The chain runs to 410 residues: Peptidase T (410 aa).

His79 serves as a coordination point for Zn(2+). Asp81 is a catalytic residue. Asp142 contributes to the Zn(2+) binding site. Glu176 acts as the Proton acceptor in catalysis. Residues Glu177, Asp199, and His381 each contribute to the Zn(2+) site.

It belongs to the peptidase M20B family. Zn(2+) serves as cofactor.

It localises to the cytoplasm. It carries out the reaction Release of the N-terminal residue from a tripeptide.. Cleaves the N-terminal amino acid of tripeptides. This is Peptidase T from Bacillus mycoides (strain KBAB4) (Bacillus weihenstephanensis).